We begin with the raw amino-acid sequence, 93 residues long: Alpha-defensin 3 (93 aa).

The signal sequence occupies residues 1 to 16 (MKTLVLLSALVLLAFQ). Positions 17-58 (VQADPIQNTDEETKTEEQPGEDDQAVSVSFGDPEGSSLQEES) are excised as a propeptide. The interval 22–56 (IQNTDEETKTEEQPGEDDQAVSVSFGDPEGSSLQE) is disordered. Cystine bridges form between cysteine 64-cysteine 92, cysteine 66-cysteine 81, and cysteine 71-cysteine 91.

This sequence belongs to the alpha-defensin family. In terms of tissue distribution, paneth cells of the small bowel.

The protein resides in the secreted. Its function is as follows. Probably contributes to the antimicrobial barrier function of the small bowel mucosa. The protein is Alpha-defensin 3 (Defa3) of Mus musculus (Mouse).